The chain runs to 302 residues: tRNA-cytidine(32) 2-sulfurtransferase (302 aa).

Residues 45–50 carry the PP-loop motif motif; sequence SGGKDS. Residues Cys-120, Cys-123, and Cys-211 each contribute to the [4Fe-4S] cluster site.

The protein belongs to the TtcA family. In terms of assembly, homodimer. Mg(2+) is required as a cofactor. Requires [4Fe-4S] cluster as cofactor.

The protein resides in the cytoplasm. The enzyme catalyses cytidine(32) in tRNA + S-sulfanyl-L-cysteinyl-[cysteine desulfurase] + AH2 + ATP = 2-thiocytidine(32) in tRNA + L-cysteinyl-[cysteine desulfurase] + A + AMP + diphosphate + H(+). Its pathway is tRNA modification. Functionally, catalyzes the ATP-dependent 2-thiolation of cytidine in position 32 of tRNA, to form 2-thiocytidine (s(2)C32). The sulfur atoms are provided by the cysteine/cysteine desulfurase (IscS) system. The chain is tRNA-cytidine(32) 2-sulfurtransferase from Aeromonas salmonicida (strain A449).